A 23-amino-acid polypeptide reads, in one-letter code: Potassium channel toxin kappa-KTx 1.2 (23 aa).

2 disulfides stabilise this stretch: Cys4/Cys22 and Cys8/Cys18. Residue Cys22 is modified to Cysteine amide.

It belongs to the short scorpion toxin superfamily. Potassium channel inhibitor kappa-KTx family. Kappa-KTx 1 subfamily. In terms of processing, the two disulfide isomers globular (C1-C3, C2-C4) and beads (C1-C2, C3-C4) do not show activity on Kv10.1/KCNH1/EAG1. As to expression, expressed by the venom gland.

It localises to the secreted. In terms of biological role, shows weak blocking activity on voltage-gated potassium channels Kv10.1/KCNH1/EAG1 (IC(50)=26 uM), Kv1.2/KCNA2 (Kd=150 uM), Kv1.3/KCNA3 (Kd=40 uM), Kv1.6/KCNA3 (16.6% inhibition at 40 uM toxin). The block is dose-dependent, voltage-independent, and reversible. Also shows a weak inhibitory activity on the plant pathogen F.culmorum growth (IC(50)=18.8-37.7 uM). This chain is Potassium channel toxin kappa-KTx 1.2, found in Chersonesometrus fulvipes (Indian black scorpion).